Reading from the N-terminus, the 880-residue chain is MDTAEIRRRFLNHFSERGHTVVPSASLVAQDPTLLLVNAGMVPFKPYFLGDLKAPWNRATSVQKCVRTVDIDNVGRTARHASFFQMCGNFSFGDYFKAEAIPFAFELIVDGYGFNPDDLWATVYLDDDEAEAIWRTLLPAERIQRRGKKDNFWSMGVPGPCGPCSEIYFDRGPAYGREGGPEADEDRYLEIWNLVFMQFARGEGSEYGYEIVGDLPARNIDTGMGLERMATILQGVENLYEIDISRPVLDAAGRLTGTRYGADPDSDVRLRVVADHTRTAAMLISDGVSPSNEGRGYVLRRMLRRAVRDARLLGAREPVMDELFGVVRAAMGPIYPELVDQAEAITAVAVAEETAFLETLRTGTTLFDTAVTQARSSGSSQLSGESAFRLHDTYGFPIDLTMDMAADAGLTVDEAGFRRLMERQRQAAKADRASRRIGNLDLSAFRPILAASGPTTFTGYTELGRESGIVGIVGIGDGDSLTAAGEGEEVGILLDATPFYAESGGQEADLGRIRFDGGEAEVLDVQRPVPDLVMHRVKVLGGELRVGADVFAEVDVERRRAVSRSHTATHLVHTAFRRALGESATQAGSLNSPGRLRFDFHALGAVPDSVLADVEDEVNEIALRDLEVRWYVTSQEEARRLGAMALFGEKYGDRVRVVDVGDYARELCGGTHVASSAQLGAIKLLSESSISAGTRRVEALVGMDAFRFLAREHVLVSQLSSTLKARPDELADRVADIVGRLRDAEKELERLRAQAVLAGSAALAAGAEDVGGVALVTAQVPAGTPADDVRLLALDVRGRLAGRPAVVAVVEAAGAAVVVATDETARTRGLRAGDLVRHSWAALGGKGGGKPDVAQGGRGDADMIPKVFARLRELVADQSA.

4 residues coordinate Zn(2+): histidine 566, histidine 570, cysteine 668, and histidine 672.

This sequence belongs to the class-II aminoacyl-tRNA synthetase family. Zn(2+) is required as a cofactor.

Its subcellular location is the cytoplasm. The enzyme catalyses tRNA(Ala) + L-alanine + ATP = L-alanyl-tRNA(Ala) + AMP + diphosphate. In terms of biological role, catalyzes the attachment of alanine to tRNA(Ala) in a two-step reaction: alanine is first activated by ATP to form Ala-AMP and then transferred to the acceptor end of tRNA(Ala). Also edits incorrectly charged Ser-tRNA(Ala) and Gly-tRNA(Ala) via its editing domain. This Parafrankia sp. (strain EAN1pec) protein is Alanine--tRNA ligase.